Here is a 275-residue protein sequence, read N- to C-terminus: UBX domain-containing protein 8 (275 aa).

Residue methionine 1 is a topological domain, cytoplasmic. Residues 2-22 form a helical membrane-spanning segment; that stretch reads ASRGVVGIFLLSALPLLCLEL. The Lumenal portion of the chain corresponds to 23–33; it reads RRGKPDLGIKD. The helical transmembrane segment at 34–54 threads the bilayer; sequence LILLCGRIFLLLALLTLIISV. At 55-275 the chain is on the cytoplasmic side; it reads TTSWVNSFKP…LNVEEKEQSS (221 aa). The disordered stretch occupies residues 137–181; the sequence is DEDLELDSESQTSFETSNREAAKRRNLPNSVTNISPPAEQPTKKE. Residues 192 to 268 form the UBX domain; that stretch reads TAEEVVTVAL…GITVDTVLNV (77 aa).

In terms of assembly, interacts with SYVN1 and VCP.

It is found in the endoplasmic reticulum membrane. Its function is as follows. Involved in endoplasmic reticulum-associated degradation (ERAD) for misfolded lumenal proteins, possibly by tethering VCP to the endoplasmic reticulum membrane. May play a role in reproduction. In terms of biological role, may play a role in reproduction. This Bos taurus (Bovine) protein is UBX domain-containing protein 8 (UBXN8).